Here is a 117-residue protein sequence, read N- to C-terminus: Small ribosomal subunit protein bS6 (117 aa).

A disordered region spans residues 96 to 117 (HDEGPSVQMQKRDEREGRRERR).

This sequence belongs to the bacterial ribosomal protein bS6 family.

Functionally, binds together with bS18 to 16S ribosomal RNA. This is Small ribosomal subunit protein bS6 from Jannaschia sp. (strain CCS1).